Reading from the N-terminus, the 142-residue chain is Small heat shock protein IbpB (142 aa).

One can recognise a sHSP domain in the interval 26–137 (SGESQSFPPY…PPQRIAINER (112 aa)).

The protein belongs to the small heat shock protein (HSP20) family. As to quaternary structure, homodimer. Forms homomultimers of about 100-150 subunits at optimal growth temperatures. Conformation changes to oligomers at high temperatures or high ionic concentrations. The decrease in size of the multimers is accompanied by an increase in chaperone activity.

It is found in the cytoplasm. In terms of biological role, associates with aggregated proteins, together with IbpA, to stabilize and protect them from irreversible denaturation and extensive proteolysis during heat shock and oxidative stress. Aggregated proteins bound to the IbpAB complex are more efficiently refolded and reactivated by the ATP-dependent chaperone systems ClpB and DnaK/DnaJ/GrpE. Its activity is ATP-independent. The polypeptide is Small heat shock protein IbpB (Salmonella typhi).